The sequence spans 265 residues: Apolipoprotein A-I (265 aa).

A signal peptide spans 1-18; it reads MKAVVLTLAVLFLTGSQA. Tandem repeats lie at residues 67–88 and 89–110. The 10 X approximate tandem repeats stretch occupies residues 67–265; it reads LKLLDNWDSL…DEASKKLNAQ (199 aa). The residue at position 109 (Met109) is a Methionine sulfoxide. Residues 111 to 121 form a 3; half-length repeat; that stretch reads KDLEEVKKKVQ. Repeat copies occupy residues 122–142, 144–165, 166–187, 188–209, and 210–230. Met135 carries the post-translational modification Methionine sulfoxide. The stretch at 231–241 is one 9; half-length repeat; it reads PALEDLRQGLL. Repeat unit 10 spans residues 242-265; sequence PVLENLKVSILAAIDEASKKLNAQ.

It belongs to the apolipoprotein A1/A4/E family. Homodimer. Interacts with APOA1BP and CLU. Component of a sperm activating protein complex (SPAP), consisting of APOA1, an immunoglobulin heavy chain, an immunoglobulin light chain and albumin. Interacts with NDRG1. Interacts with SCGB3A2. Interacts with NAXE and YJEFN3. Post-translationally, glycosylated. In terms of processing, palmitoylated. Phosphorylation sites are present in the extracellular medium. As to expression, major protein of plasma HDL, also found in chylomicrons. Synthesized predominantly in the intestine and the liver.

The protein localises to the secreted. Functionally, participates in the reverse transport of cholesterol from tissues to the liver for excretion by promoting cholesterol efflux from tissues and by acting as a cofactor for the lecithin cholesterol acyltransferase (LCAT). As part of the SPAP complex, activates spermatozoa motility. The sequence is that of Apolipoprotein A-I (APOA1) from Sus scrofa (Pig).